Here is a 294-residue protein sequence, read N- to C-terminus: Ribosomal protein L11 methyltransferase (294 aa).

Thr146, Gly167, Asp189, and Asn231 together coordinate S-adenosyl-L-methionine.

Belongs to the methyltransferase superfamily. PrmA family.

Its subcellular location is the cytoplasm. It carries out the reaction L-lysyl-[protein] + 3 S-adenosyl-L-methionine = N(6),N(6),N(6)-trimethyl-L-lysyl-[protein] + 3 S-adenosyl-L-homocysteine + 3 H(+). Its function is as follows. Methylates ribosomal protein L11. The polypeptide is Ribosomal protein L11 methyltransferase (Aliivibrio salmonicida (strain LFI1238) (Vibrio salmonicida (strain LFI1238))).